A 214-amino-acid polypeptide reads, in one-letter code: MAETSGPQSSHISSSSAGDKGSGCAVRDLLYWRDVKQSGMVFGGTMVLLLSLAAFSIISVISYLVLSLLSVTISFRVYKSVLQAVQKTEEGHPFKPLLEKDIALSSDSFQKGLSSSLAHVNHALKSIVRLFLVEDLVDSLKLALLMWLMTYIGAVFNGITLLILGVLLAFTTPLVYEKYKVQIDHYVSLVHSQVKSITEKIQAKLPGALKKKSE.

Residues 1 to 22 (MAETSGPQSSHISSSSAGDKGS) form a disordered region. The 189-residue stretch at 26-214 (VRDLLYWRDV…LPGALKKKSE (189 aa)) folds into the Reticulon domain. 2 helical membrane-spanning segments follow: residues 46–66 (MVLL…YLVL) and 150–170 (TYIG…LLAF).

In terms of assembly, homodimer.

The protein localises to the endoplasmic reticulum membrane. The protein resides in the golgi apparatus membrane. In terms of biological role, may be involved in membrane trafficking in the early secretory pathway. The polypeptide is Reticulon-3-B (rtn3-b) (Xenopus laevis (African clawed frog)).